The sequence spans 445 residues: Methylenetetrahydrofolate--tRNA-(uracil-5-)-methyltransferase TrmFO (445 aa).

Position 9–14 (9–14) interacts with FAD; the sequence is GGGLAG.

Belongs to the MnmG family. TrmFO subfamily. It depends on FAD as a cofactor.

The protein localises to the cytoplasm. It catalyses the reaction uridine(54) in tRNA + (6R)-5,10-methylene-5,6,7,8-tetrahydrofolate + NADH + H(+) = 5-methyluridine(54) in tRNA + (6S)-5,6,7,8-tetrahydrofolate + NAD(+). The enzyme catalyses uridine(54) in tRNA + (6R)-5,10-methylene-5,6,7,8-tetrahydrofolate + NADPH + H(+) = 5-methyluridine(54) in tRNA + (6S)-5,6,7,8-tetrahydrofolate + NADP(+). Functionally, catalyzes the folate-dependent formation of 5-methyl-uridine at position 54 (M-5-U54) in all tRNAs. This Rhizorhabdus wittichii (strain DSM 6014 / CCUG 31198 / JCM 15750 / NBRC 105917 / EY 4224 / RW1) (Sphingomonas wittichii) protein is Methylenetetrahydrofolate--tRNA-(uracil-5-)-methyltransferase TrmFO.